The following is a 220-amino-acid chain: Cytidylate kinase (220 aa).

Position 10–18 (10–18 (GPASSGKST)) interacts with ATP.

The protein belongs to the cytidylate kinase family. Type 1 subfamily.

The protein resides in the cytoplasm. The catalysed reaction is CMP + ATP = CDP + ADP. The enzyme catalyses dCMP + ATP = dCDP + ADP. The chain is Cytidylate kinase from Lactococcus lactis subsp. cremoris (strain MG1363).